We begin with the raw amino-acid sequence, 172 residues long: MDLQTYIRSIPDFPKPGILFRDINPLLRNPAAMVEVMRRLGAICDAVQPDLIVGIESRGFIVGTPLALQRSLGFVPVRKPGKLPGAVIGVDYALEYGTDRLEIQSDALTGNPRVLVVDDLLATGGTAAATGSLVRAAGGELVGFAFVIELEPLGGRSALPDEVLAESLIRYP.

The protein belongs to the purine/pyrimidine phosphoribosyltransferase family. Homodimer.

Its subcellular location is the cytoplasm. The catalysed reaction is AMP + diphosphate = 5-phospho-alpha-D-ribose 1-diphosphate + adenine. It functions in the pathway purine metabolism; AMP biosynthesis via salvage pathway; AMP from adenine: step 1/1. Catalyzes a salvage reaction resulting in the formation of AMP, that is energically less costly than de novo synthesis. The polypeptide is Adenine phosphoribosyltransferase (Parasynechococcus marenigrum (strain WH8102)).